The chain runs to 180 residues: uncharacterized protein (180 aa).

This is an uncharacterized protein from Staphylococcus aureus.